The following is a 91-amino-acid chain: Probable Fe(2+)-trafficking protein (91 aa).

It belongs to the Fe(2+)-trafficking protein family.

Its function is as follows. Could be a mediator in iron transactions between iron acquisition and iron-requiring processes, such as synthesis and/or repair of Fe-S clusters in biosynthetic enzymes. The polypeptide is Probable Fe(2+)-trafficking protein (Burkholderia thailandensis (strain ATCC 700388 / DSM 13276 / CCUG 48851 / CIP 106301 / E264)).